A 198-amino-acid polypeptide reads, in one-letter code: Proteasome subunit beta 2 (198 aa).

A propeptide spans 1 to 4 (MVLA) (removed in mature form; by autocatalysis). Threonine 5 functions as the Nucleophile in the catalytic mechanism.

This sequence belongs to the peptidase T1B family. As to quaternary structure, the 20S proteasome core is composed of 14 alpha and 14 beta subunits that assemble into four stacked heptameric rings, resulting in a barrel-shaped structure. The two inner rings, each composed of seven catalytic beta subunits, are sandwiched by two outer rings, each composed of seven alpha subunits. The catalytic chamber with the active sites is on the inside of the barrel. Has a gated structure, the ends of the cylinder being occluded by the N-termini of the alpha-subunits. Is capped at one or both ends by the proteasome regulatory ATPase, PAN.

It localises to the cytoplasm. It catalyses the reaction Cleavage of peptide bonds with very broad specificity.. The formation of the proteasomal ATPase PAN-20S proteasome complex, via the docking of the C-termini of PAN into the intersubunit pockets in the alpha-rings, triggers opening of the gate for substrate entry. Interconversion between the open-gate and close-gate conformations leads to a dynamic regulation of the 20S proteasome proteolysis activity. Functionally, component of the proteasome core, a large protease complex with broad specificity involved in protein degradation. This chain is Proteasome subunit beta 2, found in Korarchaeum cryptofilum (strain OPF8).